We begin with the raw amino-acid sequence, 209 residues long: dITP/XTP pyrophosphatase (209 aa).

22–27 (SHNQGK) contacts substrate. Asp-83 serves as the catalytic Proton acceptor. Residue Asp-83 coordinates Mg(2+). Residues Ser-84, 167–170 (FGYD), Lys-190, and 195–196 (HR) each bind substrate.

It belongs to the HAM1 NTPase family. As to quaternary structure, homodimer. It depends on Mg(2+) as a cofactor.

It catalyses the reaction XTP + H2O = XMP + diphosphate + H(+). It carries out the reaction dITP + H2O = dIMP + diphosphate + H(+). The catalysed reaction is ITP + H2O = IMP + diphosphate + H(+). Its function is as follows. Pyrophosphatase that catalyzes the hydrolysis of nucleoside triphosphates to their monophosphate derivatives, with a high preference for the non-canonical purine nucleotides XTP (xanthosine triphosphate), dITP (deoxyinosine triphosphate) and ITP. Seems to function as a house-cleaning enzyme that removes non-canonical purine nucleotides from the nucleotide pool, thus preventing their incorporation into DNA/RNA and avoiding chromosomal lesions. The sequence is that of dITP/XTP pyrophosphatase from Zymomonas mobilis subsp. mobilis (strain ATCC 31821 / ZM4 / CP4).